The primary structure comprises 516 residues: Golgi-associated kinase 1B (516 aa).

Topologically, residues 1–37 (MTCPDKLGQLINWFVCSLCAPRVCKLWSSRRPRTRRN) are cytoplasmic. The chain crosses the membrane as a helical; Signal-anchor for type II membrane protein span at residues 38-55 (LLLGTACAIYLGFLVSQV). Topologically, residues 56–516 (GKGSFQHGQA…HGARVLPMNE (461 aa)) are extracellular. A glycan (N-linked (GlcNAc...) asparagine) is linked at asparagine 286.

Belongs to the GASK family.

Its subcellular location is the golgi apparatus membrane. In Rattus norvegicus (Rat), this protein is Golgi-associated kinase 1B.